The sequence spans 225 residues: UPF0758 protein Sama_0327 (225 aa).

Residues 102-224 (VLTSPDLTRD…IVSFAERGWI (123 aa)) enclose the MPN domain. Zn(2+)-binding residues include histidine 173, histidine 175, and aspartate 186. The JAMM motif motif lies at 173 to 186 (HNHPSGVAEPSQAD).

The protein belongs to the UPF0758 family.

This is UPF0758 protein Sama_0327 from Shewanella amazonensis (strain ATCC BAA-1098 / SB2B).